Consider the following 456-residue polypeptide: MTKKVYVKTFGCQMNEYDSDKMVDVLGAAEGLVKTDTPEDADVILFNTCSVREKAQEKVFSDLGRVRELKEANPNLLIGVGGCVASQEGASIVARAPYVDLVFGPQTLHRLPQMIDQRRASGRPQVDITFPEIEKFDHLPPARIDGPSAFVSIMEGCSKYCSYCVVPYTRGEEVSRPLDDVLTEIAGLADQGVREVTLLGQNVNAYRGAMTLGATEIADFATLIEYVADIPGIERIRYTTSHPKEFTQRLIDTYAKVPKLVSHLHLPVQHGSDRILMAMKRGYTVLEYKSVIRKLRAIRPDLSLSTDMIVGFPGETEEDFDKMMQLVHDMSYDTSFSFIYSPRPGTPAANLQDDTPREVKLRRLQHLQATIEENVQRISQAMVGKVERILVERPARKDPNELAGRTENNRVVNFPAPVETHARLIGQMIDVKIVHAYPHSLRGELVMVHDTAPATH.

One can recognise an MTTase N-terminal domain in the interval 3–120; it reads KKVYVKTFGC…LPQMIDQRRA (118 aa). [4Fe-4S] cluster is bound by residues Cys12, Cys49, Cys83, Cys157, Cys161, and Cys164. The 235-residue stretch at 143-377 folds into the Radical SAM core domain; that stretch reads RIDGPSAFVS…QATIEENVQR (235 aa). Residues 380 to 447 enclose the TRAM domain; the sequence is QAMVGKVERI…PHSLRGELVM (68 aa).

It belongs to the methylthiotransferase family. MiaB subfamily. In terms of assembly, monomer. The cofactor is [4Fe-4S] cluster.

It is found in the cytoplasm. It catalyses the reaction N(6)-dimethylallyladenosine(37) in tRNA + (sulfur carrier)-SH + AH2 + 2 S-adenosyl-L-methionine = 2-methylsulfanyl-N(6)-dimethylallyladenosine(37) in tRNA + (sulfur carrier)-H + 5'-deoxyadenosine + L-methionine + A + S-adenosyl-L-homocysteine + 2 H(+). Catalyzes the methylthiolation of N6-(dimethylallyl)adenosine (i(6)A), leading to the formation of 2-methylthio-N6-(dimethylallyl)adenosine (ms(2)i(6)A) at position 37 in tRNAs that read codons beginning with uridine. The sequence is that of tRNA-2-methylthio-N(6)-dimethylallyladenosine synthase from Paraburkholderia phymatum (strain DSM 17167 / CIP 108236 / LMG 21445 / STM815) (Burkholderia phymatum).